The chain runs to 461 residues: Cysteine--tRNA ligase (461 aa).

Residue Cys29 participates in Zn(2+) binding. The 'HIGH' region signature appears at 31–41 (MTIYDLCHVGH). Zn(2+)-binding residues include Cys213, His238, and Glu242. The 'KMSKS' region motif lies at 274–278 (KMSKS). Lys277 is an ATP binding site.

The protein belongs to the class-I aminoacyl-tRNA synthetase family. Monomer. Zn(2+) is required as a cofactor.

Its subcellular location is the cytoplasm. The enzyme catalyses tRNA(Cys) + L-cysteine + ATP = L-cysteinyl-tRNA(Cys) + AMP + diphosphate. This is Cysteine--tRNA ligase from Methylibium petroleiphilum (strain ATCC BAA-1232 / LMG 22953 / PM1).